Reading from the N-terminus, the 172-residue chain is uncharacterized protein (172 aa).

A run of 4 helical transmembrane segments spans residues methionine 1 to isoleucine 21, asparagine 41 to asparagine 61, glutamine 72 to leucine 92, and phenylalanine 136 to valine 156.

It localises to the cell membrane. This is an uncharacterized protein from Haemophilus influenzae (strain ATCC 51907 / DSM 11121 / KW20 / Rd).